Consider the following 552-residue polypeptide: Cation transporter HKT1;1 (552 aa).

The Cytoplasmic portion of the chain corresponds to 1–70 (MHPPSLVLDT…QSYSFLVCKS (70 aa)). 2 helical membrane-spanning segments follow: residues 71 to 91 (NPLV…FLAL) and 133 to 153 (LWVL…MLGL). Residues 154 to 221 (YFNNANANRN…TYNPCAVLVR (68 aa)) are Cytoplasmic-facing. 2 helical membrane-spanning segments follow: residues 222 to 242 (IVTG…IIYF) and 291 to 311 (VLLL…SPLL). Residues 312–348 (RLCVWVLGKVSGKAEYAYILQHPGETGYKHLHVRRNS) are Cytoplasmic-facing. 2 consecutive transmembrane segments (helical) span residues 349–369 (VYIV…ICSF) and 402–422 (ILDI…VMYL). Topologically, residues 423 to 448 (PSDASFLTANADNQPLTDKKTNSISR) are cytoplasmic. A run of 2 helical transmembrane segments spans residues 449-471 (ALWR…LACI) and 524-544 (GFVG…MFLG). The Cytoplasmic portion of the chain corresponds to 545 to 552 (RLKEFILK).

Belongs to the TrkH potassium transport family. HKT (TC 2.A.38.3) subfamily. In terms of tissue distribution, expressed in shoots. In roots, expressed in epidermis, exodermis, cortex, and sieve elements and companion cells of phloem. In mature leaves, expressed in large highly vacuolated cells of the adaxial epidermis, phloem and xylem.

Its subcellular location is the membrane. It carries out the reaction Na(+)(in) = Na(+)(out). In terms of biological role, functions as a low-affinity sodium transporter. This chain is Cation transporter HKT1;1, found in Oryza sativa subsp. japonica (Rice).